The following is a 708-amino-acid chain: Kin of IRRE-like protein 2 (708 aa).

Positions 1–20 (MLRMRVPALLVLLFCFRGRA) are cleaved as a signal peptide. Residues 21–510 (GPSPHFLQQP…GRRDLLPTVR (490 aa)) are Extracellular-facing. Ig-like C2-type domains follow at residues 24-118 (PHFL…AQLH), 123-222 (PEAP…ITLS), 227-307 (PEVT…TALD), 312-394 (PILQ…ARLT), and 398-501 (PPVV…ASLG). The cysteines at positions 45 and 103 are disulfide-linked. Asparagine 143 is a glycosylation site (N-linked (GlcNAc...) asparagine). Disulfide bonds link cysteine 146-cysteine 204 and cysteine 248-cysteine 291. Positions 149–151 (RGD) match the Cell attachment site motif. N-linked (GlcNAc...) asparagine glycosylation occurs at asparagine 301. 2 disulfide bridges follow: cysteine 333-cysteine 375 and cysteine 419-cysteine 485. An N-linked (GlcNAc...) asparagine glycan is attached at asparagine 484. Residues 511 to 531 (IVAGVAAATTTLLMVITGVAL) form a helical membrane-spanning segment. The Cytoplasmic portion of the chain corresponds to 532–708 (CCWRHSKASA…PSHPRLQTHV (177 aa)). The tract at residues 545 to 601 (EQKNLMRIPGSSDGSSSRGPEEEETGSREDRGPIVHTDHSDLVLEEEGTLETKDPTN) is disordered. Residues 553-562 (PGSSDGSSSR) show a composition bias toward low complexity. Residues 569–586 (TGSREDRGPIVHTDHSDL) show a composition bias toward basic and acidic residues. Serine 571 carries the post-translational modification Phosphoserine. A phosphotyrosine mark is found at tyrosine 603, tyrosine 604, and tyrosine 661. Residues 684–708 (LAPGTPPFPYAAFPTPSHPRLQTHV) form a disordered region.

This sequence belongs to the immunoglobulin superfamily. Homodimer. Interacts with NPHS2/podocin (via the C-terminus). Interacts with NPHS1 (via the Ig-like domains). Interacts with FYN. N-glycosylated. Post-translationally, the extracellular domain is cleaved leading to the generation of a soluble fragment and a membrane-bound C-terminal fragment, which is further cleaved by gamma-secretase. Highly expressed in beta-cells of the pancreatic islets.

Its subcellular location is the cell membrane. May regulate basal insulin secretion. This Homo sapiens (Human) protein is Kin of IRRE-like protein 2 (KIRREL2).